The sequence spans 431 residues: Histidinol dehydrogenase (431 aa).

NAD(+) is bound by residues Y124, Q187, and N210. 3 residues coordinate substrate: S236, Q258, and H261. Positions 258 and 261 each coordinate Zn(2+). Catalysis depends on proton acceptor residues E325 and H326. H326, D359, E413, and H418 together coordinate substrate. D359 contributes to the Zn(2+) binding site. H418 contacts Zn(2+).

This sequence belongs to the histidinol dehydrogenase family. Zn(2+) serves as cofactor.

The enzyme catalyses L-histidinol + 2 NAD(+) + H2O = L-histidine + 2 NADH + 3 H(+). It participates in amino-acid biosynthesis; L-histidine biosynthesis; L-histidine from 5-phospho-alpha-D-ribose 1-diphosphate: step 9/9. In terms of biological role, catalyzes the sequential NAD-dependent oxidations of L-histidinol to L-histidinaldehyde and then to L-histidine. The chain is Histidinol dehydrogenase from Legionella pneumophila (strain Paris).